The primary structure comprises 134 residues: ATP synthase epsilon chain (134 aa).

This sequence belongs to the ATPase epsilon chain family. In terms of assembly, F-type ATPases have 2 components, CF(1) - the catalytic core - and CF(0) - the membrane proton channel. CF(1) has five subunits: alpha(3), beta(3), gamma(1), delta(1), epsilon(1). CF(0) has three main subunits: a, b and c.

The protein localises to the cell membrane. In terms of biological role, produces ATP from ADP in the presence of a proton gradient across the membrane. The chain is ATP synthase epsilon chain from Alkaliphilus oremlandii (strain OhILAs) (Clostridium oremlandii (strain OhILAs)).